The chain runs to 350 residues: Protein RecA (350 aa).

68–75 (GPESSGKT) lines the ATP pocket.

This sequence belongs to the RecA family.

The protein localises to the cytoplasm. Can catalyze the hydrolysis of ATP in the presence of single-stranded DNA, the ATP-dependent uptake of single-stranded DNA by duplex DNA, and the ATP-dependent hybridization of homologous single-stranded DNAs. It interacts with LexA causing its activation and leading to its autocatalytic cleavage. In Mycolicibacterium gilvum (strain PYR-GCK) (Mycobacterium gilvum (strain PYR-GCK)), this protein is Protein RecA.